Consider the following 467-residue polypeptide: Putative odorant receptor 85e (467 aa).

The Cytoplasmic segment spans residues 1–60 (MASLQFHGNVDADIRYDISLDPARESNLFRLLMGLQLANGTKPSPRLPKWWPKRLEMIGK). A helical transmembrane segment spans residues 61–81 (VLPKAYCSMVIFTSLHLGVLF). Over 82–98 (TKTTLDVLPTGELQAIT) the chain is Extracellular. Residues 99-119 (DALTMTIIYFFTGYGTIYWCL) traverse the membrane as a helical segment. Residues 120-159 (RSRRLLAYMEHMNREYRHHSLAGVTFVSSHAAFRMSRNFT) lie on the Cytoplasmic side of the membrane. Residues 160-180 (VVWIMSCLLGVISWGVSPLML) form a helical membrane-spanning segment. At 181 to 212 (GIRMLPLQCWYPFDALGPGTYTAVYATQLFGQ) the chain is on the extracellular side. A helical membrane pass occupies residues 213–233 (IMVGMTFGFGGSLFVTLSLLL). Residues 234–286 (LGQFDVLYCSLKNLDAHTKLLGGESVNGLSSLQEELLLGDSKRELNQYVLLQE) lie on the Cytoplasmic side of the membrane. Residues 287 to 307 (HPTDLLRLSAGRKCPDQGNAF) traverse the membrane as a helical segment. Residues 308–334 (HNALVECIRLHRFILHCSQELENLFSP) are Extracellular-facing. A helical transmembrane segment spans residues 335–355 (YCLVKSLQITFQLCLLVFVGV). The Cytoplasmic portion of the chain corresponds to 356–367 (SGTREVLRIVNQ). The chain crosses the membrane as a helical span at residues 368-388 (LQYLGLTIFELLMFTYCGELL). Residues 389-467 (SRHSIRSGDA…LAAKKTESEL (79 aa)) lie on the Extracellular side of the membrane.

Belongs to the insect chemoreceptor superfamily. Heteromeric odorant receptor channel (TC 1.A.69) family. Or2a subfamily. In terms of assembly, interacts with Orco. Complexes exist early in the endomembrane system in olfactory sensory neurons (OSNs), coupling these complexes to the conserved ciliary trafficking pathway. In terms of tissue distribution, expressed in 15% of the 120 sensory neurons within the maxillary palp.

It is found in the cell membrane. In terms of biological role, odorant receptor which mediates acceptance or avoidance behavior, depending on its substrates. The odorant receptor repertoire encodes a large collection of odor stimuli that vary widely in identity, intensity, and duration. May form a complex with Orco to form odorant-sensing units, providing sensitive and prolonged odorant signaling and calcium permeability. The chain is Putative odorant receptor 85e (Or85e) from Drosophila melanogaster (Fruit fly).